A 98-amino-acid chain; its full sequence is NADH-ubiquinone oxidoreductase chain 4L (98 aa).

Helical transmembrane passes span 2–22 (PSTF…TLMF), 26–46 (LMST…MTSV), and 58–79 (PIPI…ALLV).

It belongs to the complex I subunit 4L family. As to quaternary structure, core subunit of respiratory chain NADH dehydrogenase (Complex I) which is composed of 45 different subunits.

It localises to the mitochondrion inner membrane. It carries out the reaction a ubiquinone + NADH + 5 H(+)(in) = a ubiquinol + NAD(+) + 4 H(+)(out). Its function is as follows. Core subunit of the mitochondrial membrane respiratory chain NADH dehydrogenase (Complex I) which catalyzes electron transfer from NADH through the respiratory chain, using ubiquinone as an electron acceptor. Part of the enzyme membrane arm which is embedded in the lipid bilayer and involved in proton translocation. This Mus musculus (Mouse) protein is NADH-ubiquinone oxidoreductase chain 4L.